Consider the following 121-residue polypeptide: UPF0102 protein Syncc9902_1284 (121 aa).

This sequence belongs to the UPF0102 family.

The polypeptide is UPF0102 protein Syncc9902_1284 (Synechococcus sp. (strain CC9902)).